Here is a 263-residue protein sequence, read N- to C-terminus: Polyglutamine-binding protein 1 (263 aa).

Positions 46–80 (EGLPPSWYKVFDPSCGLPYYWNVETDLVSWLSPHD) constitute a WW domain. A disordered region spans residues 94–263 (NNNADAEDKS…AEASRTKQQD (170 aa)). The span at 99-173 (AEDKSDRNLE…DKADREEGKD (75 aa)) shows a compositional bias: basic and acidic residues. Residues 104–110 (DRNLEKV) form a 1-1; approximate repeat. Positions 104–138 (DRNLEKVDRNHEKSDRSHEKPDRSHEKADRNHEKN) are 5 X 7 AA approximate tandem repeats of D-R-[NS]-H-E-K-S. Residues 111–117 (DRNHEKS) form a 1-2 repeat. The stretch at 118–124 (DRSHEKP) is one 1-3; approximate repeat. One copy of the 1-4; approximate repeat lies at 125 to 131 (DRSHEKA). The 1-5; approximate repeat unit spans residues 132-138 (DRNHEKN). 9 consecutive repeat copies span residues 139-140 (DR), 141-142 (ER), 143-144 (ER), 150-151 (DR), 152-153 (ER), 154-155 (DR), 156-157 (DR), 158-159 (ER), and 160-161 (ER). Residues 139–144 (DRERER) are 3 X 2 AA tandem repeats of [DE]-R. The segment at 150-161 (DRERDRDRERER) is 6 X 2 AA tandem repeats of [DE]-R. Residues 243-253 (YPSPGAVLRAN) form an important for interaction with TXNL4A region. Ser-245 is modified (phosphoserine).

Interacts with POU3F2/Brn-2, ATXN1, TXNL4A, HTT and AR. Interaction with ATXN1 correlates positively with the length of the polyglutamine tract. Interacts with RNA polymerase II large subunit in a phosphorylation-dependent manner. Forms a ternary complex with ATXN1 mutant and phosphorylated RNA polymerase II. Interacts (via C-terminus) with TXNL4A and CD2BP2. Interacts (via WW domain) with ATN1 and SF3B1, and may interact with additional splice factors. Interacts (via WW domain) with WBP11; Leading to reduce interaction between PQBP1 and TXNL4A. Interacts with CAPRIN1. Interacts with DDX1. Interacts with SFPQ. Interacts with KHSRP. As to expression, detected in brain cortex and hippocampus neurons (at protein level). Expressed in brain with high level in cerebellar cortex, hippocampus and olfactory bulb.

The protein localises to the nucleus. Its subcellular location is the nucleus speckle. It is found in the cytoplasmic granule. Intrinsically disordered protein that acts as a scaffold, and which is involved in different processes, such as pre-mRNA splicing, transcription regulation, innate immunity and neuron development. Interacts with splicing-related factors via the intrinsically disordered region and regulates alternative splicing of target pre-mRNA species. May suppress the ability of POU3F2 to transactivate the DRD1 gene in a POU3F2 dependent manner. Can activate transcription directly or via association with the transcription machinery. May be involved in ATXN1 mutant-induced cell death. The interaction with ATXN1 mutant reduces levels of phosphorylated RNA polymerase II large subunit. Involved in the assembly of cytoplasmic stress granule, possibly by participating in the transport of neuronal RNA granules. Also acts as an innate immune sensor of infection by retroviruses, by detecting the presence of reverse-transcribed DNA in the cytosol. Directly binds retroviral reverse-transcribed DNA in the cytosol and interacts with CGAS, leading to activate the cGAS-STING signaling pathway, triggering type-I interferon production. The protein is Polyglutamine-binding protein 1 (Pqbp1) of Mus musculus (Mouse).